Here is a 340-residue protein sequence, read N- to C-terminus: E3 ubiquitin ligase BIG BROTHER-related (340 aa).

Disordered regions lie at residues 1–56 and 133–182; these read MPME…GVGE and YDED…GNSD. Residues 34–46 are compositionally biased toward polar residues; sequence NRQTGVVSDTGSG. 2 stretches are compositionally biased toward acidic residues: residues 133–164 and 173–182; these read YDEDEFDDPENEDEDDDEDEYETDDDPQEDGL and DDQEDDGNSD. An RING-type; atypical zinc finger spans residues 288-329; the sequence is CVICRLDYEDDEDLILLPCKHSYHSECINNWLKINKVCPVCS.

Post-translationally, auto-ubiquitinated.

It catalyses the reaction S-ubiquitinyl-[E2 ubiquitin-conjugating enzyme]-L-cysteine + [acceptor protein]-L-lysine = [E2 ubiquitin-conjugating enzyme]-L-cysteine + N(6)-ubiquitinyl-[acceptor protein]-L-lysine.. It functions in the pathway protein modification; protein ubiquitination. In terms of biological role, E3 ubiquitin-ligase probably involved in organ size regulation. The protein is E3 ubiquitin ligase BIG BROTHER-related (BBR) of Arabidopsis thaliana (Mouse-ear cress).